Consider the following 464-residue polypeptide: Serine protease PepD (464 aa).

The tract at residues 1-71 (MAKLARVVGL…TQYRQPYEAL (71 aa)) is disordered. Over 1–100 (MAKLARVVGL…GMVRQRPRAG (100 aa)) the chain is Cytoplasmic. The span at 39-48 (QGQQQTYSQQ) shows a compositional bias: low complexity. Residues 101-121 (MLAIGAVTIAVVSAGIGGAAA) traverse the membrane as a helical segment. Residues 122–464 (SLVGFNRAPA…VQVTLGKAEQ (343 aa)) are Periplasmic-facing. Residues H197, D236, and S317 each act as charge relay system in the active site. Residues 368–449 (LISTGKASHA…TVALTFQDPS (82 aa)) enclose the PDZ domain.

It belongs to the peptidase S1C family. As to quaternary structure, homotrimer. Interacts with numerous proteins, including the 35 kDa antigen PspA.

The protein localises to the cell inner membrane. Its subcellular location is the secreted. It localises to the cell wall. The catalysed reaction is Acts on substrates that are at least partially unfolded. The cleavage site P1 residue is normally between a pair of hydrophobic residues, such as Val-|-Val.. Its activity is regulated as follows. Probably regulates its own activity by autocleavage, which removes the PDZ domain. Inhibited by the serine protease inhibitor diisopropylfluorophosphate (DFP). Inhibited by fluoroquinolone such as ciprofloxacin, moxifloxacin and ofloxacin and their analogs. Required for virulence. Acts both as a protease, which degrades and/or refolds damaged substrate targets, and as a chaperone. Plays an important role in the stress response network mediated through the two-component regulatory system MprAB and SigE signaling networks. May utilize its PDZ domain to recognize and process misfolded proteins at the cell membrane, leading to activation of the MprAB and SigE signaling pathways and subsequent establishment of a positive feedback loop that facilitates bacterial adaptation. Interacts with and potentially cleaves several proteins, including the 35 kDa antigen PspA. Proteolytic cleavage of PspA may help to maintain cell envelope homeostasis in Mycobacterium and regulate specific stress response pathways during periods of extracytoplasmic stress. In vitro, exhibits proteolytic activity against the artificial substrate beta-casein. The protein is Serine protease PepD of Mycobacterium tuberculosis (strain ATCC 25618 / H37Rv).